The chain runs to 1067 residues: Kinesin-like protein KIF11-B (1067 aa).

In terms of domain architecture, Kinesin motor spans 18–359 (NIQVVVRCRP…LDYANRAKSI (342 aa)). 105–112 (GQTGTGKT) is an ATP binding site. Residues 365–480 (VNQKLTKKAL…SKEQLAQESF (116 aa)) adopt a coiled-coil conformation. Threonine 937 carries the post-translational modification Phosphothreonine; by CDK1. Serine 1046 carries the phosphoserine; by NEK6 modification.

This sequence belongs to the TRAFAC class myosin-kinesin ATPase superfamily. Kinesin family. BimC subfamily. In terms of assembly, heterotetramer of two heavy and two light chains. Interacts with aurka. In terms of processing, phosphorylation of Thr-937 during mitosis controls the association of this protein with the spindle apparatus. Post-translationally, a subset of this protein primarily localized at the spindle pole is phosphorylated by NEK6 during mitosis. Phosphorylated on a serine residue by aurka. In terms of tissue distribution, in unfertilized eggs, shows highest expression in the germinal vesicle and radial yolk-poor channels. Also present in testis.

The protein localises to the cytoplasm. Its subcellular location is the cytoskeleton. The protein resides in the spindle pole. Plus end-directed motor protein required for establishing a bipolar spindle. Associates with both interphase and spindle microtubules. May be involved in nuclear divisions taking place during the development of unfertilized eggs. Required in non-mitotic cells for transport of secretory proteins from the Golgi complex to the cell surface. This chain is Kinesin-like protein KIF11-B (kif11-b), found in Xenopus laevis (African clawed frog).